We begin with the raw amino-acid sequence, 530 residues long: Portal protein (530 aa).

The protein belongs to the siphoviridae portal protein family. Homododecamer. Interacts with the terminase complex composed of two small and one large terminase subunits. Post-translationally, proteolytically cleaved by the viral protease during capsid maturation.

The protein localises to the virion. Functionally, forms the portal vertex of the capsid. This portal plays critical roles in head assembly, genome packaging, neck/tail attachment, and genome ejection. The portal protein multimerizes as a single ring-shaped homododecamer arranged around a central channel. Binds to the terminase subunits to form the packaging machine. This Escherichia phage N15 (Bacteriophage N15) protein is Portal protein.